The chain runs to 688 residues: Two-component response regulator ORR23 (688 aa).

The Response regulatory domain maps to 25–140; the sequence is RVLAVDDDPV…ELRNIWQHVI (116 aa). Aspartate 76 carries the 4-aspartylphosphate modification. The tract at residues 161 to 212 is disordered; the sequence is PPNADSDHVHGHVTCGSPDQSGRPSKKRKEYCSEEEDEGEVNTQDIDDPSAP. Residues 193 to 208 show a composition bias toward acidic residues; sequence SEEEDEGEVNTQDIDD. The segment at residues 211-270 is a DNA-binding region (myb-like GARP); the sequence is APKKPRVVWSVELHRKFVAAVNQLGIDKAVPKRILELMNVEKLTRENVASHLQKYRLYLK.

It belongs to the ARR family. Type-B subfamily. Post-translationally, two-component system major event consists of a His-to-Asp phosphorelay between a sensor histidine kinase (HK) and a response regulator (RR). In plants, the His-to-Asp phosphorelay involves an additional intermediate named Histidine-containing phosphotransfer protein (HPt). This multistep phosphorelay consists of a His-Asp-His-Asp sequential transfer of a phosphate group between first a His and an Asp of the HK protein, followed by the transfer to a conserved His of the HPt protein and finally the transfer to an Asp in the receiver domain of the RR protein.

It localises to the nucleus. Functionally, transcriptional activator that binds specific DNA sequence. Functions as a response regulator involved in His-to-Asp phosphorelay signal transduction system. Phosphorylation of the Asp residue in the receiver domain activates the ability of the protein to promote the transcription of target genes. May directly activate some type-A response regulators in response to cytokinins. This chain is Two-component response regulator ORR23, found in Oryza sativa subsp. japonica (Rice).